Here is a 792-residue protein sequence, read N- to C-terminus: Probable beta-D-xylosidase 6 (792 aa).

An N-terminal signal peptide occupies residues 1-18 (MNLQLTLISLLFFTSAIA). Asparagine 44, asparagine 104, asparagine 124, and asparagine 239 each carry an N-linked (GlcNAc...) asparagine glycan. Aspartate 309 is a catalytic residue. 2 N-linked (GlcNAc...) asparagine glycosylation sites follow: asparagine 444 and asparagine 618.

It belongs to the glycosyl hydrolase 3 family.

It localises to the secreted. The protein resides in the extracellular space. The protein localises to the extracellular matrix. This is Probable beta-D-xylosidase 6 (BXL6) from Arabidopsis thaliana (Mouse-ear cress).